Here is a 58-residue protein sequence, read N- to C-terminus: Ikitoxin (58 aa).

The region spanning Val3–Val58 is the LCN-type CS-alpha/beta domain. 3 disulfide bridges follow: Cys18/Cys41, Cys27/Cys46, and Cys31/Cys48.

Expressed by the venom gland.

Its subcellular location is the secreted. In terms of biological role, beta toxins bind voltage-independently at site-4 of sodium channels (Nav) and shift the voltage of activation toward more negative potentials thereby affecting sodium channel activation and promoting spontaneous and repetitive firing. Does not produce effect when administered to blowfly and cabbage looper larvae. In mice, does not produce convulsions, tremors, increased ventilation nor death. The protein is Ikitoxin of Parabuthus transvaalicus (Transvaal thick-tailed scorpion).